The chain runs to 319 residues: Aspartate carbamoyltransferase catalytic subunit (319 aa).

Carbamoyl phosphate-binding residues include Arg65 and Thr66. An L-aspartate-binding site is contributed by Lys93. Carbamoyl phosphate-binding residues include Arg115, His149, and Gln152. Positions 182 and 237 each coordinate L-aspartate. Residues Gly278 and Pro279 each contribute to the carbamoyl phosphate site.

It belongs to the aspartate/ornithine carbamoyltransferase superfamily. ATCase family. As to quaternary structure, heterododecamer (2C3:3R2) of six catalytic PyrB chains organized as two trimers (C3), and six regulatory PyrI chains organized as three dimers (R2).

It catalyses the reaction carbamoyl phosphate + L-aspartate = N-carbamoyl-L-aspartate + phosphate + H(+). Its pathway is pyrimidine metabolism; UMP biosynthesis via de novo pathway; (S)-dihydroorotate from bicarbonate: step 2/3. Functionally, catalyzes the condensation of carbamoyl phosphate and aspartate to form carbamoyl aspartate and inorganic phosphate, the committed step in the de novo pyrimidine nucleotide biosynthesis pathway. The polypeptide is Aspartate carbamoyltransferase catalytic subunit (Azoarcus sp. (strain BH72)).